The sequence spans 71 residues: Defensin-like protein 124 (71 aa).

The first 25 residues, 1–25, serve as a signal peptide directing secretion; it reads MSKPTVIVIFMAILVLGMATKETQG. Cystine bridges form between Cys28–Cys71, Cys40–Cys60, Cys45–Cys65, and Cys49–Cys67.

This sequence belongs to the DEFL family.

The protein resides in the secreted. In Arabidopsis thaliana (Mouse-ear cress), this protein is Defensin-like protein 124 (LCR16).